Here is a 204-residue protein sequence, read N- to C-terminus: GTP cyclohydrolase-2 (204 aa).

Residue 49–53 (RIHSE) coordinates GTP. Zn(2+) contacts are provided by C54, C65, and C67. GTP-binding positions include Q70, 92–94 (EGR), and T114. Catalysis depends on D126, which acts as the Proton acceptor. The active-site Nucleophile is R128. Residues T149 and K154 each contribute to the GTP site.

It belongs to the GTP cyclohydrolase II family. Zn(2+) is required as a cofactor.

The enzyme catalyses GTP + 4 H2O = 2,5-diamino-6-hydroxy-4-(5-phosphoribosylamino)-pyrimidine + formate + 2 phosphate + 3 H(+). It participates in cofactor biosynthesis; riboflavin biosynthesis; 5-amino-6-(D-ribitylamino)uracil from GTP: step 1/4. Catalyzes the conversion of GTP to 2,5-diamino-6-ribosylamino-4(3H)-pyrimidinone 5'-phosphate (DARP), formate and pyrophosphate. This is GTP cyclohydrolase-2 from Shewanella baltica (strain OS223).